Here is a 441-residue protein sequence, read N- to C-terminus: Putative transporter AmpG 1 (441 aa).

A run of 12 helical transmembrane segments spans residues Ser-5–Gly-25, Ile-42–Phe-62, Leu-78–Leu-98, Leu-104–Ile-124, Gly-143–Leu-163, Glu-171–Ala-191, Ser-249–Tyr-269, Val-297–Met-317, Ser-325–Ile-345, Leu-352–Ile-372, Phe-390–Val-410, and Phe-413–Leu-433.

It belongs to the major facilitator superfamily.

It is found in the cell inner membrane. This is Putative transporter AmpG 1 (ampG1) from Rickettsia felis (strain ATCC VR-1525 / URRWXCal2) (Rickettsia azadi).